A 790-amino-acid chain; its full sequence is Vacuolar protein sorting-associated protein 35C (790 aa).

Met-1 carries the post-translational modification N-acetylmethionine.

It belongs to the VPS35 family. Component of the retromer complex which consists of VPS29 (MAG1), VPS26 (VPS26A or VPS26B), VPS35 (VPS35A or VPS35B or VPS35C), VPS5/17 (SNX1 or SNX2A or SNX2B). Component of a retromer subcomplex consisting of VPS29 (MAG1), VPS26 (VPS26A or VPS26B), VPS35 (VPS35A or VPS35B or VPS35C).

Its subcellular location is the cytoplasm. It localises to the endosome membrane. It is found in the prevacuolar compartment membrane. The protein resides in the golgi apparatus. The protein localises to the trans-Golgi network membrane. Its function is as follows. Plays a role in vesicular protein sorting. Component of the membrane-associated retromer complex which is essential in endosome-to-Golgi retrograde transport. Also involved in the efficient sorting of seed storage proteins. The VPS29-VPS26-VPS35 subcomplex may be involved in recycling of specific cargos from endosome to the plasma membrane. The chain is Vacuolar protein sorting-associated protein 35C (VPS35C) from Arabidopsis thaliana (Mouse-ear cress).